The following is an 80-amino-acid chain: Serine palmitoyltransferase small subunit B (80 aa).

Residues 1 to 11 are Cytoplasmic-facing; sequence MDVKHIKDYLS. Residues 12-29 form a helical membrane-spanning segment; it reads WLYYQYLLITCSYVLEPW. Topologically, residues 30-36 are lumenal; it reads EQSIFNT. Residues 37 to 57 form a helical membrane-spanning segment; that stretch reads LLLTIIAMVIYSSYIFIPIHV. Over 58-80 the chain is Cytoplasmic; sequence RLAVEFFSRIFGGQHESTVALMS.

It belongs to the SPTSS family. SPTSSB subfamily. Component of the serine palmitoyltransferase (SPT) complex, which is composed of SPTLC1, SPTLC2 or SPTLC3 and SPTSSA or SPTSSB. The heterodimer consisting of SPTLC1 and SPTLC2/SPTLC3 forms the catalytic core of the enzyme, while SPTSSA or SPTSSB subunits determine substrate specificity. SPT also interacts with ORMDL proteins, especially ORMDL3, which negatively regulate SPT activity in the presence of ceramides.

It is found in the endoplasmic reticulum membrane. The protein operates within lipid metabolism; sphingolipid metabolism. Functionally, component of the serine palmitoyltransferase multisubunit enzyme (SPT) that catalyzes the initial and rate-limiting step in sphingolipid biosynthesis by condensing L-serine and activated acyl-CoA (most commonly palmitoyl-CoA) to form long-chain bases. The SPT complex is composed of SPTLC1, SPTLC2 or SPTLC3 and SPTSSA or SPTSSB. Within this complex, the heterodimer consisting of SPTLC1 and SPTLC2/SPTLC3 forms the catalytic core. Within the SPT complex, SPTSSB stimulates the catalytic activity and plays a role in substrate specificity. SPT complexes with this subunit showing a preference for longer acyl-CoAs. The SPTLC1-SPTLC2-SPTSSB complex shows a strong preference for C18-CoA substrate, while the SPTLC1-SPTLC3-SPTSSB isozyme displays an ability to use a broader range of acyl-CoAs, without apparent preference. This is Serine palmitoyltransferase small subunit B (sptssb) from Xenopus laevis (African clawed frog).